The chain runs to 177 residues: dCTP deaminase, dUMP-forming (177 aa).

DCTP is bound by residues 98 to 103, N110, 115 to 118, 123 to 125, Q144, 157 to 160, and Q164; these read RSSVGR, DPGF, TLE, and YQGK. The Proton donor/acceptor role is filled by E125.

The protein belongs to the dCTP deaminase family. In terms of assembly, homotrimer. Mg(2+) is required as a cofactor.

It catalyses the reaction dCTP + 2 H2O = dUMP + NH4(+) + diphosphate. It functions in the pathway pyrimidine metabolism; dUMP biosynthesis; dUMP from dCTP: step 1/1. With respect to regulation, inhibited by dTTP. Functionally, bifunctional enzyme that catalyzes both the deamination of dCTP to dUTP and the hydrolysis of dUTP to dUMP without releasing the toxic dUTP intermediate. The sequence is that of dCTP deaminase, dUMP-forming from Halalkalibacterium halodurans (strain ATCC BAA-125 / DSM 18197 / FERM 7344 / JCM 9153 / C-125) (Bacillus halodurans).